A 128-amino-acid chain; its full sequence is Large ribosomal subunit protein bL17 (128 aa).

The protein belongs to the bacterial ribosomal protein bL17 family. As to quaternary structure, part of the 50S ribosomal subunit. Contacts protein L32.

This is Large ribosomal subunit protein bL17 from Glaesserella parasuis serovar 5 (strain SH0165) (Haemophilus parasuis).